We begin with the raw amino-acid sequence, 206 residues long: Uridine kinase (206 aa).

Residue 11–18 (GGSASGKT) coordinates ATP.

The protein belongs to the uridine kinase family.

It is found in the cytoplasm. The catalysed reaction is uridine + ATP = UMP + ADP + H(+). It catalyses the reaction cytidine + ATP = CMP + ADP + H(+). It functions in the pathway pyrimidine metabolism; CTP biosynthesis via salvage pathway; CTP from cytidine: step 1/3. Its pathway is pyrimidine metabolism; UMP biosynthesis via salvage pathway; UMP from uridine: step 1/1. This Lactococcus lactis subsp. cremoris (strain MG1363) protein is Uridine kinase.